The sequence spans 140 residues: uncharacterized protein (140 aa).

Positions 62-140 (TEARAGRGGP…PQGRWGPSLG (79 aa)) are disordered. Low complexity predominate over residues 71–94 (PATARSRVSADSQGGRAGSSSPSS).

This is an uncharacterized protein from Homo sapiens (Human).